The sequence spans 176 residues: ATP synthase subunit b (176 aa).

The helical transmembrane segment at 27–47 (FFVFSFLTLILVVTIVTLLVY) threads the bilayer.

The protein belongs to the ATPase B chain family. As to quaternary structure, F-type ATPases have 2 components, F(1) - the catalytic core - and F(0) - the membrane proton channel. F(1) has five subunits: alpha(3), beta(3), gamma(1), delta(1), epsilon(1). F(0) has three main subunits: a(1), b(2) and c(10-14). The alpha and beta chains form an alternating ring which encloses part of the gamma chain. F(1) is attached to F(0) by a central stalk formed by the gamma and epsilon chains, while a peripheral stalk is formed by the delta and b chains.

The protein localises to the cell membrane. In terms of biological role, f(1)F(0) ATP synthase produces ATP from ADP in the presence of a proton or sodium gradient. F-type ATPases consist of two structural domains, F(1) containing the extramembraneous catalytic core and F(0) containing the membrane proton channel, linked together by a central stalk and a peripheral stalk. During catalysis, ATP synthesis in the catalytic domain of F(1) is coupled via a rotary mechanism of the central stalk subunits to proton translocation. Its function is as follows. Component of the F(0) channel, it forms part of the peripheral stalk, linking F(1) to F(0). This chain is ATP synthase subunit b, found in Metamycoplasma arthritidis (strain 158L3-1) (Mycoplasma arthritidis).